Here is a 147-residue protein sequence, read N- to C-terminus: Phospholipase A2 inhibitor subunit A (147 aa).

The 82-residue stretch at 62 to 143 (EICRQAGGRI…DDNLLVVCEF (82 aa)) folds into the C-type lectin domain. 2 disulfide bridges follow: Cys64/Cys141 and Cys119/Cys133. A glycan (N-linked (GlcNAc...) asparagine) is linked at Asn103.

Belongs to the alpha-type phospholipase A2 inhibitor family. Homotrimer; non-covalently linked. Glycosylated. In terms of tissue distribution, expressed by the liver.

The protein localises to the secreted. Functionally, inhibits the enzymatic activity of the acidic phospholipase A2 (PLA2). The protein is Phospholipase A2 inhibitor subunit A of Gloydius brevicaudus siniticus (Chinese mamushi).